The chain runs to 546 residues: Probable bifunctional SAT/APS kinase (546 aa).

Residues 1-370 (MEKIKYLKSI…LAETYVPKHK (370 aa)) are sulfate adenylyltransferase. The segment at 371 to 546 (QGFCVWLTGL…FLKKEGFIKD (176 aa)) is adenylsulfate kinase. 379 to 386 (GLPCAGKS) provides a ligand contact to ATP. Catalysis depends on Ser453, which acts as the Phosphoserine intermediate.

It in the N-terminal section; belongs to the sulfate adenylyltransferase family. This sequence in the C-terminal section; belongs to the APS kinase family.

It carries out the reaction sulfate + ATP + H(+) = adenosine 5'-phosphosulfate + diphosphate. The catalysed reaction is adenosine 5'-phosphosulfate + ATP = 3'-phosphoadenylyl sulfate + ADP + H(+). It participates in sulfur metabolism; hydrogen sulfide biosynthesis; sulfite from sulfate: step 1/3. It functions in the pathway sulfur metabolism; hydrogen sulfide biosynthesis; sulfite from sulfate: step 2/3. This Aquifex aeolicus (strain VF5) protein is Probable bifunctional SAT/APS kinase (sat/cysC).